The following is a 527-amino-acid chain: MLASIISILRVFVLLFNTPLFIFAFLPVGFLGYFILQAYAKNPLFPKLWLVLASLFFYAFWNVKYLPLLVGSIVFNYFVALKIHQTQPNAYKRLWLILGLIANVSLLGFFKYTDFFLTNFNLIWKSHFETLHLILPLAISFFTLQQIAYLMDTYKQNQIMQPKMRERVSENAPILLNPPTSFFSLSHFLDYALFVSFFPQLIAGPIVHHSEMMPQFKDKNNQYLNYRNIALGLFIFSIGLFKKVVIADNTAHFADFGFDKATSLSFIQAWMTSLSYSFQLYFDFSGYCDMAIGIGLFFNIKLPINFNSPYKALNIQDFWRRWHITLSRFLKEYLYIPLGGNRVKELIVYRNLILVFLIGGFWHGAGWTFIIWGLLHGIALSVHRAYSHATRKFHFTMPKILAWLITFNFINLAWVFFRAKNLESALKVLKGMVGLNGVSLCHLSKEASEFLNRVNDNMIMHTIMYASPTFKMCVLMIIISFCLKNSSHLYQSNQMDWIKTTSACLLLSIGFLFIFASSQSVFLYFNF.

11 helical membrane-spanning segments follow: residues 11–31 (VFVL…VGFL), 55–75 (LFFY…SIVF), 96–116 (LILG…TDFF), 131–151 (LHLI…AYLM), 187–207 (HFLD…GPIV), 228–248 (NIAL…VIAD), 280–300 (LYFD…FFNI), 352–372 (LILV…FIIW), 397–417 (MPKI…WVFF), 463–483 (IMYA…SFCL), and 505–525 (LLLS…FLYF). His363 is an active-site residue.

It belongs to the membrane-bound acyltransferase family.

It localises to the cell membrane. Its function is as follows. Catalyzes the O-acetylation of peptidoglycan (PG), an important mechanism that appears to confer lysozyme resistance and contributes to pathogen persistence in the host. The protein is Peptidoglycan O-acetyltransferase (patA) of Helicobacter pylori (strain ATCC 700392 / 26695) (Campylobacter pylori).